The chain runs to 883 residues: Translation initiation factor IF-2 (883 aa).

Residues 118-261 form a disordered region; it reads VARESEAAPA…KKKEAFKKTE (144 aa). A compositionally biased stretch (low complexity) spans 124–150; the sequence is AAPAEEPVAAAVKPASEPPVVQKAPVA. 2 stretches are compositionally biased toward basic and acidic residues: residues 183-200 and 252-261; these read PADR…EERI and KKKEAFKKTE. The tr-type G domain occupies 383–552; it reads KRPPVVTIMG…LLQADVMDLK (170 aa). The G1 stretch occupies residues 392–399; the sequence is GHVDHGKT. 392 to 399 is a binding site for GTP; sequence GHVDHGKT. Residues 417–421 form a G2 region; that stretch reads GITQH. The interval 438–441 is G3; the sequence is DTPG. Residues 438-442 and 492-495 each bind GTP; these read DTPGH and NKID. The tract at residues 492–495 is G4; it reads NKID. The tract at residues 528–530 is G5; sequence SAK.

This sequence belongs to the TRAFAC class translation factor GTPase superfamily. Classic translation factor GTPase family. IF-2 subfamily.

The protein resides in the cytoplasm. One of the essential components for the initiation of protein synthesis. Protects formylmethionyl-tRNA from spontaneous hydrolysis and promotes its binding to the 30S ribosomal subunits. Also involved in the hydrolysis of GTP during the formation of the 70S ribosomal complex. The chain is Translation initiation factor IF-2 from Geobacter sulfurreducens (strain ATCC 51573 / DSM 12127 / PCA).